Consider the following 286-residue polypeptide: Bifunctional protein FolD 2 (286 aa).

Residues 165-167, threonine 192, and valine 233 contribute to the NADP(+) site; that span reads GRG.

This sequence belongs to the tetrahydrofolate dehydrogenase/cyclohydrolase family. Homodimer.

The catalysed reaction is (6R)-5,10-methylene-5,6,7,8-tetrahydrofolate + NADP(+) = (6R)-5,10-methenyltetrahydrofolate + NADPH. The enzyme catalyses (6R)-5,10-methenyltetrahydrofolate + H2O = (6R)-10-formyltetrahydrofolate + H(+). Its pathway is one-carbon metabolism; tetrahydrofolate interconversion. Catalyzes the oxidation of 5,10-methylenetetrahydrofolate to 5,10-methenyltetrahydrofolate and then the hydrolysis of 5,10-methenyltetrahydrofolate to 10-formyltetrahydrofolate. The sequence is that of Bifunctional protein FolD 2 from Rhodococcus jostii (strain RHA1).